Consider the following 301-residue polypeptide: Methionyl-tRNA formyltransferase (301 aa).

(6S)-5,6,7,8-tetrahydrofolate is bound at residue 110-113 (SLLP).

The protein belongs to the Fmt family.

It catalyses the reaction L-methionyl-tRNA(fMet) + (6R)-10-formyltetrahydrofolate = N-formyl-L-methionyl-tRNA(fMet) + (6S)-5,6,7,8-tetrahydrofolate + H(+). Attaches a formyl group to the free amino group of methionyl-tRNA(fMet). The formyl group appears to play a dual role in the initiator identity of N-formylmethionyl-tRNA by promoting its recognition by IF2 and preventing the misappropriation of this tRNA by the elongation apparatus. This chain is Methionyl-tRNA formyltransferase, found in Acidiphilium cryptum (strain JF-5).